Consider the following 265-residue polypeptide: Type III pantothenate kinase (265 aa).

Position 6-13 (D6–V13) interacts with ATP. G112–R115 is a substrate binding site. D114 acts as the Proton acceptor in catalysis. D134 contributes to the K(+) binding site. T137 contributes to the ATP binding site. Residue T189 participates in substrate binding.

This sequence belongs to the type III pantothenate kinase family. Homodimer. Requires NH4(+) as cofactor. It depends on K(+) as a cofactor.

Its subcellular location is the cytoplasm. The catalysed reaction is (R)-pantothenate + ATP = (R)-4'-phosphopantothenate + ADP + H(+). It functions in the pathway cofactor biosynthesis; coenzyme A biosynthesis; CoA from (R)-pantothenate: step 1/5. In terms of biological role, catalyzes the phosphorylation of pantothenate (Pan), the first step in CoA biosynthesis. This is Type III pantothenate kinase from Streptomyces avermitilis (strain ATCC 31267 / DSM 46492 / JCM 5070 / NBRC 14893 / NCIMB 12804 / NRRL 8165 / MA-4680).